Reading from the N-terminus, the 34-residue chain is Photosystem II reaction center protein M (34 aa).

The chain crosses the membrane as a helical span at residues 5-25 (ILAFIATALFILVPTAFLLII).

This sequence belongs to the PsbM family. In terms of assembly, PSII is composed of 1 copy each of membrane proteins PsbA, PsbB, PsbC, PsbD, PsbE, PsbF, PsbH, PsbI, PsbJ, PsbK, PsbL, PsbM, PsbT, PsbX, PsbY, PsbZ, Psb30/Ycf12, at least 3 peripheral proteins of the oxygen-evolving complex and a large number of cofactors. It forms dimeric complexes.

It localises to the plastid. The protein localises to the chloroplast thylakoid membrane. Functionally, one of the components of the core complex of photosystem II (PSII). PSII is a light-driven water:plastoquinone oxidoreductase that uses light energy to abstract electrons from H(2)O, generating O(2) and a proton gradient subsequently used for ATP formation. It consists of a core antenna complex that captures photons, and an electron transfer chain that converts photonic excitation into a charge separation. This subunit is found at the monomer-monomer interface. In Ceratophyllum demersum (Rigid hornwort), this protein is Photosystem II reaction center protein M.